A 206-amino-acid chain; its full sequence is Twist-related protein 1 (206 aa).

Positions 1–18 are enriched in low complexity; it reads MMQDVSSSPVSPADDSLS. Residues 1 to 109 form a disordered region; sequence MMQDVSSSPV…GGGSPQSYEE (109 aa). Over residues 34–43 the composition is skewed to basic residues; it reads RGARKRRSSR. 2 stretches are compositionally biased toward gly residues: residues 48–65 and 78–103; these read GSAG…GGDE and SAGG…GGGS. The bHLH domain occupies 112-163; the sequence is TQRVMANVRERQRTQSLNEAFAALRKIIPTLPSDKLSKIQTLKLAARYIDFL. A sufficient for transactivation activity region spans residues 165-195; it reads QVLQSDELDSKMASCSYVAHERLSYAFSVWR.

Efficient DNA binding requires dimerization with another bHLH protein. Homodimer or heterodimer with E proteins such as TCF3. ID1 binds preferentially to TCF3 but does not interact efficiently with TWIST1 so ID1 levels control the amount of TCF3 available to dimerize with TWIST1 and thus determine the type of dimer formed. In terms of tissue distribution, subset of mesodermal cells.

It is found in the nucleus. Acts as a transcriptional regulator. Inhibits myogenesis by sequestrating E proteins, inhibiting trans-activation by MEF2, and inhibiting DNA-binding by MYOD1 through physical interaction. This interaction probably involves the basic domains of both proteins. Also represses expression of pro-inflammatory cytokines such as TNFA and IL1B. Regulates cranial suture patterning and fusion. Activates transcription as a heterodimer with E proteins. Regulates gene expression differentially, depending on dimer composition. Homodimers induce expression of FGFR2 and POSTN while heterodimers repress FGFR2 and POSTN expression and induce THBS1 expression. Heterodimerization is also required for osteoblast differentiation. Represses the activity of the circadian transcriptional activator: NPAS2-BMAL1 heterodimer. The protein is Twist-related protein 1 (Twist1) of Mus musculus (Mouse).